The sequence spans 408 residues: uncharacterized protein (408 aa).

2 disordered regions span residues 184-206 (DENNNNSNNNNNNNSNNNSSILF) and 254-317 (NNKT…SSDS). The segment covering 187-206 (NNNSNNNNNNNSNNNSSILF) has biased composition (low complexity).

This is an uncharacterized protein from Dictyostelium discoideum (Social amoeba).